Consider the following 2083-residue polypeptide: Centriole proteome protein 16 (2083 aa).

The tract at residues 205–333 is disordered; sequence DAPTMDFMPP…PAVPPPLSPS (129 aa). A compositionally biased stretch (low complexity) spans 227-245; sequence TAETADTAGAAGRKSLSGA. Over residues 246–258 the composition is skewed to gly residues; the sequence is SAGGAGPAKGGAK. Composition is skewed to low complexity over residues 259-274 and 283-292; these read AGAAAGGKRAVSSAGA and GSTAGAATPG. The segment covering 302-315 has biased composition (acidic residues); that stretch reads GEEDFEDDLSEDLD. Residues 319–331 are compositionally biased toward pro residues; sequence PLPPSPAVPPPLS. WD repeat units lie at residues 482 to 523, 526 to 569, 579 to 620, 689 to 726, 728 to 767, 770 to 809, 812 to 853, 856 to 895, 990 to 1029, and 1041 to 1079; these read GHTA…CLAI, AHAS…AAGG, ATEY…GTSV, LHAAAINCLVVSDGLVLTGGDDRLLRAWPLDFRDYLLE, EHEGAVTGLAMSTDALRLAVGTENGTLGVLAIPTHAYTTL, SHCGAVNAVAVDPNRDQYCTVSSDGTLRIWHLATHQQLYE, APGE…LLQE, QHRAGITELLFSPGGDRLFSGGADGALVVYDTARMYAPAQ, VSPLELTALCLDPAGRYAATAGADGLLRLWGCVPLPALRG, and GHPSAILGAAFHRSGYLVTVGDADCVCVWRVNADHMQQE. Disordered regions lie at residues 1113–1141 and 1225–1276; these read HTQATGALDPTDPRSRAHPSTALGPVASA and ALVV…PPPP. The segment covering 1263 to 1276 has biased composition (pro residues); it reads VPLPPSPQPLPPPP. WD repeat units follow at residues 1326-1365, 1403-1444, 1448-1486, 1497-1539, 1651-1691, 1736-1781, and 1785-1824; these read GHNRPLSCLAASPDGALVAAGPAAAEPAFTEPAAGARAAQ, YHPL…LVAA, EQSPRAAAWLWGGHNPAFATAGADGLLLWTLQDNFLEQR, RDPR…QPPQ, GQAA…AEPA, DPLD…QLSW, and RHPAPVVGVAPHPRRGLVLSASSDGSLAVTDLSSTRLVSY. The tract at residues 1713-1743 is disordered; it reads APAHTLRHPPSAAPSSAASSSPLDPLDPLPA. A compositionally biased stretch (low complexity) spans 1720-1743; that stretch reads HPPSAAPSSAASSSPLDPLDPLPA. Residues 1832–1870 are disordered; it reads GPTPHSPGGTGRRSPRGAASPPPAPPRPGTGPLQAMAVS. Pro residues predominate over residues 1851 to 1860; it reads SPPPAPPRPG. The stretch at 2035-2073 is one WD 18 repeat; sequence GHAGAVAAASYTGDGGHAVTASGSVLMVWDAAQLLKGVT.

It belongs to the WD repeat WDR90/POC16 family.

It is found in the cytoplasm. It localises to the cytoskeleton. Its subcellular location is the microtubule organizing center. The protein resides in the centrosome. The protein localises to the centriole. Required for flagellum assembly and/or maintenance. This Chlamydomonas reinhardtii (Chlamydomonas smithii) protein is Centriole proteome protein 16.